Reading from the N-terminus, the 191-residue chain is Small ribosomal subunit protein bS6 (191 aa).

Residues 168-191 (KVNLTRKPTPNKSSENKQKVEKQA) form a disordered region. The span at 181–191 (SENKQKVEKQA) shows a compositional bias: basic and acidic residues.

This sequence belongs to the bacterial ribosomal protein bS6 family.

Binds together with bS18 to 16S ribosomal RNA. The polypeptide is Small ribosomal subunit protein bS6 (Mycoplasmoides gallisepticum (strain R(low / passage 15 / clone 2)) (Mycoplasma gallisepticum)).